The sequence spans 3620 residues: Cubilin (3620 aa).

A signal peptide spans 1–20; that stretch reads MSSPFLWSLIILLTFAESNG. The propeptide at 21-32 is removed in mature form; sequence EAGGFELQRQKR. The tract at residues 39–46 is interaction with AMN; sequence PRMATERG. The N-linked (GlcNAc...) asparagine glycan is linked to N102. One can recognise an EGF-like 1 domain in the interval 129-165; it reads DKKVCSSNPCQNGGTCLNLHDSFFCICPSQWKGPLCS. 6 disulfide bridges follow: C133/C144, C138/C153, C155/C164, C171/C187, C181/C196, and C198/C207. In terms of domain architecture, EGF-like 2; calcium-binding spans 167–208; sequence DVNECQIYSGTPLGCQNGATCENTAGSYSCLCSPETHGPQCA. N253 carries N-linked (GlcNAc...) asparagine glycosylation. The 42-residue stretch at 260–301 folds into the EGF-like 3; calcium-binding domain; that stretch reads DIDECNLQHAPCSPLVQCFNTQGSFYCGACPTGWQGNGYSCQ. 19 disulfides stabilise this stretch: C264–C277, C271–C286, C289–C300, C306–C321, C313–C330, C333–C344, C350–C363, C357–C373, C396–C406, C401–C415, C417–C426, C433–C444, C438–C453, C455–C464, C471–C497, C524–C546, C587–C613, C640–C662, and C705–C730. Positions 302–345 constitute an EGF-like 4; calcium-binding domain; that stretch reads DIDECKINNGGCSVVPPVMCVNTLGSYHCQACPPGYQGDGRVCT. EGF-like domains follow at residues 346–382 and 392–427; these read VIDI…YTGN and LSDT…INCT. Residue N425 is glycosylated (N-linked (GlcNAc...) asparagine). Residues 429 to 465 enclose the EGF-like 7; calcium-binding domain; sequence NINECLSNPCFNGGTCVDGVNAFSCECTRFWTGFLCQ. 13 CUB domains span residues 471–583, 587–699, 705–812, 813–924, 928–1038, 1044–1158, 1162–1274, 1275–1386, 1388–1503, 1507–1616, 1617–1731, 1735–1847, and 1849–1960; these read CGGS…WETQ, CGGI…YLTS, CGGN…YQVA, CGGE…FSAA, CGEI…YEAT, CMED…WDGS, CGGN…YQQT, CRNV…WFIH, CGGE…WQAV, CGGI…FNQV, CGGH…YAAS, CGGT…FTKI, and GNDN…WFAV. N708 and N745 each carry an N-linked (GlcNAc...) asparagine glycan. An intrachain disulfide couples C757 to C775. N777 is a glycosylation site (N-linked (GlcNAc...) asparagine). C813 and C838 are oxidised to a cystine. N853 carries an N-linked (GlcNAc...) asparagine glycan. 2 cysteine pairs are disulfide-bonded: C865–C887 and C928–C954. A glycan (N-linked (GlcNAc...) asparagine) is linked at N953. Position 976 (E976) interacts with Ca(2+). An N-linked (GlcNAc...) asparagine glycan is attached at N980. C981 and C1001 form a disulfide bridge. Positions 984, 1023, 1025, and 1026 each coordinate Ca(2+). C1044 and C1070 are joined by a disulfide. Ca(2+) is bound by residues E1092, D1102, and D1143. A disulfide bridge links C1099 with C1121. C1162 and C1188 are oxidised to a cystine. A glycan (N-linked (GlcNAc...) asparagine) is linked at N1165. Residue E1210 coordinates Ca(2+). An N-linked (GlcNAc...) asparagine glycan is attached at N1214. C1215 and C1237 are joined by a disulfide. Positions 1218, 1259, and 1262 each coordinate Ca(2+). C1275 and C1303 are disulfide-bonded. Residues N1304 and N1316 are each glycosylated (N-linked (GlcNAc...) asparagine). Residue E1325 coordinates Ca(2+). An N-linked (GlcNAc...) asparagine glycan is attached at N1329. C1330 and C1348 form a disulfide bridge. Ca(2+)-binding residues include D1333, D1370, and V1372. Intrachain disulfides connect C1388/C1414 and C1441/C1463. Residue N1497 is glycosylated (N-linked (GlcNAc...) asparagine). A disulfide bond links C1507 and C1533. N-linked (GlcNAc...) asparagine glycosylation is present at N1548. 5 cysteine pairs are disulfide-bonded: C1560/C1578, C1617/C1644, C1672/C1694, C1735/C1761, and C1788/C1809. N1643 carries an N-linked (GlcNAc...) asparagine glycan. N-linked (GlcNAc...) asparagine glycans are attached at residues N1799, N1816, and N1882. C1902 and C1924 are oxidised to a cystine. N-linked (GlcNAc...) asparagine glycosylation occurs at N1961. 2 disulfide bridges follow: C1975–C2003 and C2029–C2051. CUB domains follow at residues 1975 to 2088, 2089 to 2210, 2214 to 2331, 2333 to 2445, 2449 to 2562, 2567 to 2684, 2686 to 2798, 2802 to 2916, 2917 to 3032, 3034 to 3147, 3154 to 3271, 3275 to 3392, 3392 to 3504, and 3508 to 3620; these read CGGF…FHKS, CGGY…YEAK, CGGN…YAIA, CGGR…FESS, CGGE…YTSS, CGGS…YSFT, CGGI…WNTQ, CGGI…FVSR, CGGN…YKIT, CGGV…FQQT, CGGY…YTTV, CGGT…IAGC, CNRE…WTSS, and CGGT…TWDS. Residues N2082 and N2114 are each glycosylated (N-linked (GlcNAc...) asparagine). Cystine bridges form between C2089-C2115, C2214-C2244, and C2272-C2294. N-linked (GlcNAc...) asparagine glycosylation is present at N2317. C2333 and C2360 are joined by a disulfide. N-linked (GlcNAc...) asparagine glycans are attached at residues N2383 and N2397. 3 cysteine pairs are disulfide-bonded: C2387–C2408, C2449–C2475, and C2502–C2524. Residues N2528, N2578, N2589, and N2607 are each glycosylated (N-linked (GlcNAc...) asparagine). Residues C2567 and C2596 are joined by a disulfide bond. Intrachain disulfides connect C2625–C2646, C2686–C2712, C2739–C2761, C2802–C2828, C2857–C2880, C2917–C2943, and C2974–C2996. N2810 carries an N-linked (GlcNAc...) asparagine glycan. Residues N2920, N2942, and N2986 are each glycosylated (N-linked (GlcNAc...) asparagine). T3005 carries the phosphothreonine modification. Cystine bridges form between C3034-C3061 and C3088-C3110. N-linked (GlcNAc...) asparagine glycans are attached at residues N3039, N3100, and N3122. Cystine bridges form between C3154–C3182 and C3212–C3234. N3265, N3280, and N3292 each carry an N-linked (GlcNAc...) asparagine glycan. 2 disulfide bridges follow: C3275–C3303 and C3329–C3351. N-linked (GlcNAc...) asparagine glycosylation is present at N3354. Cysteines 3392 and 3418 form a disulfide. N-linked (GlcNAc...) asparagine glycosylation is found at N3427, N3454, and N3530. Disulfide bonds link C3445/C3467, C3508/C3534, and C3561/C3583.

Interacts with AMN. Component of the cubam complex composed of one CUBN trimer and one AMN chain. The cubam complex can dimerize. Interacts with LRP2 in a dual-receptor complex in a calcium-dependent manner. Found in a complex with PID1/PCLI1, LRP1 and CUBNI. Interacts with LRP1 and PID1/PCLI1. In terms of processing, the precursor is cleaved by a trans-Golgi proteinase furin, removing a propeptide. Post-translationally, N-glycosylated. As to expression, detected in kidney cortex (at protein level). Detected in kidney, duodenum and jejunum.

The protein localises to the apical cell membrane. It localises to the cell membrane. The protein resides in the membrane. Its subcellular location is the coated pit. It is found in the endosome. The protein localises to the lysosome membrane. In terms of biological role, endocytic receptor which plays a role in lipoprotein, vitamin and iron metabolism by facilitating their uptake. Acts together with LRP2 to mediate endocytosis of high-density lipoproteins, GC, hemoglobin, ALB, TF and SCGB1A1. Acts together with AMN to mediate endocytosis of the CBLIF-cobalamin complex. Binds to ALB, MB, Kappa and lambda-light chains, TF, hemoglobin, GC, SCGB1A1, APOA1, high density lipoprotein, and the CBLIF-cobalamin complex. Ligand binding requires calcium. Serves as important transporter in several absorptive epithelia, including intestine, renal proximal tubules and embryonic yolk sac. May play an important role in the development of the peri-implantation embryo through internalization of APOA1 and cholesterol. Binds to LGALS3 at the maternal-fetal interface. The polypeptide is Cubilin (CUBN) (Canis lupus familiaris (Dog)).